Consider the following 127-residue polypeptide: Cuticle protein 4 (127 aa).

Residue glutamine 1 is modified to Pyrrolidone carboxylic acid. 2 consecutive repeat copies span residues 31-39 and 84-92.

This Blaberus craniifer (Death's head cockroach) protein is Cuticle protein 4.